Consider the following 173-residue polypeptide: Crossover junction endodeoxyribonuclease RuvC (173 aa).

Catalysis depends on residues aspartate 8, glutamate 67, and aspartate 139. Aspartate 8, glutamate 67, and aspartate 139 together coordinate Mg(2+).

Belongs to the RuvC family. As to quaternary structure, homodimer which binds Holliday junction (HJ) DNA. The HJ becomes 2-fold symmetrical on binding to RuvC with unstacked arms; it has a different conformation from HJ DNA in complex with RuvA. In the full resolvosome a probable DNA-RuvA(4)-RuvB(12)-RuvC(2) complex forms which resolves the HJ. Mg(2+) is required as a cofactor.

Its subcellular location is the cytoplasm. It carries out the reaction Endonucleolytic cleavage at a junction such as a reciprocal single-stranded crossover between two homologous DNA duplexes (Holliday junction).. Its function is as follows. The RuvA-RuvB-RuvC complex processes Holliday junction (HJ) DNA during genetic recombination and DNA repair. Endonuclease that resolves HJ intermediates. Cleaves cruciform DNA by making single-stranded nicks across the HJ at symmetrical positions within the homologous arms, yielding a 5'-phosphate and a 3'-hydroxyl group; requires a central core of homology in the junction. The consensus cleavage sequence is 5'-(A/T)TT(C/G)-3'. Cleavage occurs on the 3'-side of the TT dinucleotide at the point of strand exchange. HJ branch migration catalyzed by RuvA-RuvB allows RuvC to scan DNA until it finds its consensus sequence, where it cleaves and resolves the cruciform DNA. The chain is Crossover junction endodeoxyribonuclease RuvC from Salmonella dublin (strain CT_02021853).